We begin with the raw amino-acid sequence, 230 residues long: Flagellar L-ring protein (230 aa).

The first 26 residues, methionine 1–glycine 26, serve as a signal peptide directing secretion. Cysteine 27 carries the N-palmitoyl cysteine lipid modification. Cysteine 27 carries the S-diacylglycerol cysteine lipid modification.

Belongs to the FlgH family. As to quaternary structure, the basal body constitutes a major portion of the flagellar organelle and consists of four rings (L,P,S, and M) mounted on a central rod.

The protein localises to the cell outer membrane. It is found in the bacterial flagellum basal body. Assembles around the rod to form the L-ring and probably protects the motor/basal body from shearing forces during rotation. This Burkholderia lata (strain ATCC 17760 / DSM 23089 / LMG 22485 / NCIMB 9086 / R18194 / 383) protein is Flagellar L-ring protein.